The sequence spans 321 residues: Glucokinase (321 aa).

Residue 8–13 coordinates ATP; it reads GDVGGT.

This sequence belongs to the bacterial glucokinase family.

Its subcellular location is the cytoplasm. The enzyme catalyses D-glucose + ATP = D-glucose 6-phosphate + ADP + H(+). The chain is Glucokinase from Klebsiella pneumoniae subsp. pneumoniae (strain ATCC 700721 / MGH 78578).